The sequence spans 202 residues: uncharacterized protein (202 aa).

Positions 1-202 (MRGILRMTVL…KGLRSAAEKR (202 aa)) constitute an START domain.

Functionally, may play a role in the interaction of the bacterium with animal cells. This is an uncharacterized protein from Pseudomonas aeruginosa (strain ATCC 15692 / DSM 22644 / CIP 104116 / JCM 14847 / LMG 12228 / 1C / PRS 101 / PAO1).